A 251-amino-acid polypeptide reads, in one-letter code: Isopentenyl-diphosphate delta-isomerase (251 aa).

Lys-49 is a binding site for substrate. Residues His-53 and His-66 each coordinate Mg(2+). Positions 64–212 constitute a Nudix hydrolase domain; it reads LLHRAFSVFL…SNSFTPWFKL (149 aa). Positions 86 and 90 each coordinate substrate. The active site involves Cys-102. Residue Ser-103 coordinates substrate. Residues Glu-162 and Glu-164 each coordinate Mg(2+). The active site involves Glu-164.

The protein belongs to the IPP isomerase type 1 family. The cofactor is Mg(2+).

The protein resides in the cytoplasm. The catalysed reaction is isopentenyl diphosphate = dimethylallyl diphosphate. It functions in the pathway isoprenoid biosynthesis; dimethylallyl diphosphate biosynthesis; dimethylallyl diphosphate from isopentenyl diphosphate: step 1/1. Its function is as follows. Isopentenyl-diphosphate delta-isomerase; part of the second module of ergosterol biosynthesis pathway that includes the middle steps of the pathway. The second module is carried out in the vacuole and involves the formation of farnesyl diphosphate, which is also an important intermediate in the biosynthesis of ubiquinone, dolichol, heme and prenylated proteins. Activity by the mevalonate kinase first converts mevalonate into 5-phosphomevalonate. 5-phosphomevalonate is then further converted to 5-diphosphomevalonate by the phosphomevalonate kinase. The diphosphomevalonate decarboxylase then produces isopentenyl diphosphate. The isopentenyl-diphosphate delta-isomerase then catalyzes the 1,3-allylic rearrangement of the homoallylic substrate isopentenyl (IPP) to its highly electrophilic allylic isomer, dimethylallyl diphosphate (DMAPP). Finally the farnesyl diphosphate synthase catalyzes the sequential condensation of isopentenyl pyrophosphate with dimethylallyl pyrophosphate, and then with the resultant geranylpyrophosphate to the ultimate product farnesyl pyrophosphate. This Phaffia rhodozyma (Yeast) protein is Isopentenyl-diphosphate delta-isomerase.